Consider the following 577-residue polypeptide: Arginine--tRNA ligase (577 aa).

A 'HIGH' region motif is present at residues 123 to 133; that stretch reads PNVAKEMHVGH.

This sequence belongs to the class-I aminoacyl-tRNA synthetase family. As to quaternary structure, monomer.

The protein localises to the cytoplasm. It carries out the reaction tRNA(Arg) + L-arginine + ATP = L-arginyl-tRNA(Arg) + AMP + diphosphate. The polypeptide is Arginine--tRNA ligase (Cronobacter sakazakii (strain ATCC BAA-894) (Enterobacter sakazakii)).